Here is a 1413-residue protein sequence, read N- to C-terminus: DNA-directed RNA polymerase subunit beta' (1413 aa).

Zn(2+)-binding residues include cysteine 70, cysteine 72, cysteine 85, and cysteine 88. Mg(2+)-binding residues include aspartate 460, aspartate 462, and aspartate 464. Zn(2+) is bound by residues cysteine 819, cysteine 893, cysteine 900, and cysteine 903.

This sequence belongs to the RNA polymerase beta' chain family. In terms of assembly, the RNAP catalytic core consists of 2 alpha, 1 beta, 1 beta' and 1 omega subunit. When a sigma factor is associated with the core the holoenzyme is formed, which can initiate transcription. Mg(2+) serves as cofactor. The cofactor is Zn(2+).

The enzyme catalyses RNA(n) + a ribonucleoside 5'-triphosphate = RNA(n+1) + diphosphate. In terms of biological role, DNA-dependent RNA polymerase catalyzes the transcription of DNA into RNA using the four ribonucleoside triphosphates as substrates. The sequence is that of DNA-directed RNA polymerase subunit beta' from Burkholderia ambifaria (strain MC40-6).